Here is a 732-residue protein sequence, read N- to C-terminus: uncharacterized protein (732 aa).

The TR mART core domain occupies 163–390; the sequence is YYTINELNYL…FGIVAKKKYE (228 aa). Active-site residues include R285, S309, and E354.

This is an uncharacterized protein from Acanthamoeba polyphaga mimivirus (APMV).